The chain runs to 571 residues: Dual specificity testis-specific protein kinase 2 (571 aa).

A Protein kinase domain is found at 58 to 313 (DFTCEKIGSG…EIGKTLEEIL (256 aa)). Residues 64 to 72 (IGSGFFSEV) and lysine 87 contribute to the ATP site. Catalysis depends on aspartate 176, which acts as the Proton acceptor. The residue at position 219 (serine 219) is a Phosphoserine; by autocatalysis. Phosphoserine is present on residues serine 369, serine 456, and serine 460. The tract at residues 521 to 571 (ENGFGSRPQGTSPCPAGASEEMEVEERPAGSTPATFSTSGIGLQTQGKQDG) is disordered. Positions 552 to 571 (TPATFSTSGIGLQTQGKQDG) are enriched in polar residues.

It belongs to the protein kinase superfamily. TKL Ser/Thr protein kinase family. Requires Mg(2+) as cofactor. It depends on Mn(2+) as a cofactor. In terms of tissue distribution, predominantly expressed in testis and prostate. Found predominantly in non-germinal Sertoli cells.

It is found in the nucleus. The enzyme catalyses L-seryl-[protein] + ATP = O-phospho-L-seryl-[protein] + ADP + H(+). It catalyses the reaction L-threonyl-[protein] + ATP = O-phospho-L-threonyl-[protein] + ADP + H(+). It carries out the reaction L-tyrosyl-[protein] + ATP = O-phospho-L-tyrosyl-[protein] + ADP + H(+). Activated by autophosphorylation on Ser-219. Functionally, dual specificity protein kinase activity catalyzing autophosphorylation and phosphorylation of exogenous substrates on both serine/threonine and tyrosine residues. Phosphorylates cofilin at 'Ser-3'. May play an important role in spermatogenesis. The chain is Dual specificity testis-specific protein kinase 2 (TESK2) from Homo sapiens (Human).